Reading from the N-terminus, the 460-residue chain is Elongation factor 1-alpha (460 aa).

Glycine 2 carries the post-translational modification N,N,N-trimethylglycine. Lysine 3 carries the N6,N6-dimethyllysine; alternate modification. The residue at position 3 (lysine 3) is an N6-methyllysine; alternate. One can recognise a tr-type G domain in the interval 6–241; sequence KQHINIVVIG…DAIEPPVRPT (236 aa). The tract at residues 15-22 is G1; it reads GHVDSGKS. 15 to 22 is a GTP binding site; the sequence is GHVDSGKS. Lysine 31 bears the N6-methyllysine mark. The segment at 71-75 is G2; it reads GITID. Lysine 80 carries the post-translational modification N6,N6,N6-trimethyllysine. Residues 92-95 are G3; it reads DAPG. Residues 92–96 and 154–157 each bind GTP; these read DAPGH and NKMD. Residues 154 to 157 form a G4 region; that stretch reads NKMD. The tract at residues 193–195 is G5; the sequence is SGF. Lysine 317 bears the N6,N6-dimethyllysine; alternate mark. Lysine 317 is modified (N6-methyllysine; alternate). Position 391 is an N6-methyllysine (lysine 391).

This sequence belongs to the TRAFAC class translation factor GTPase superfamily. Classic translation factor GTPase family. EF-Tu/EF-1A subfamily.

The protein localises to the cytoplasm. Its function is as follows. This protein promotes the GTP-dependent binding of aminoacyl-tRNA to the A-site of ribosomes during protein biosynthesis. In Aspergillus oryzae (strain ATCC 42149 / RIB 40) (Yellow koji mold), this protein is Elongation factor 1-alpha (tef1).